The sequence spans 407 residues: Serpin-Z2 (407 aa).

Positions 1–28 (MDSKRKNQELSTSETADPSLSKTNKKQK) are disordered. A compositionally biased stretch (polar residues) spans 9-22 (ELSTSETADPSLSK). Residues 344–368 (GTEAAAATTVVVVTGSCLWEPKKKI) form an RCL region.

Belongs to the serpin family.

Functionally, probable serine protease inhibitor. The polypeptide is Serpin-Z2 (Arabidopsis thaliana (Mouse-ear cress)).